Here is a 368-residue protein sequence, read N- to C-terminus: Mitogen-activated protein kinase KSS1 (368 aa).

The Protein kinase domain maps to 13–313 (YKLVDLIGEG…AAEALRHPYL (301 aa)). ATP-binding positions include 19–27 (IGEGAYGTV) and K42. D143 (proton acceptor) is an active-site residue. At T183 the chain carries Phosphothreonine. The short motif at 183–185 (TEY) is the TXY element. Residue Y185 is modified to Phosphotyrosine.

It belongs to the protein kinase superfamily. Ser/Thr protein kinase family. MAP kinase subfamily. HOG1 sub-subfamily. In the nucleus, KSS1 forms a complex with DIG1, DIG2 and STE12; in contrast to FUS3 the interaction of KSS1 with STE12 does not depend on DIG1 and DIG2. Phosphorylated KSS1 shows reduced interaction with STE12. During pheromone activation and phosphorylation, KSS1 forms a membrane-associated complex with the scaffold protein STE5, the MAPKK STE7, the MAPKKK STE11, and the G-protein beta subunit GBB/STE4; interacting directly with POF1, STE7 and STE5 proteins. Requires Mg(2+) as cofactor. In terms of processing, dually phosphorylated on Thr-183 and Tyr-185 by STE7 in response to pheromone or carbon/nitrogen limitation, which activates the enzyme. Activated FUS3 down-regulates KSS1 phosphorylation.

The protein resides in the nucleus. Its subcellular location is the cytoplasm. The protein localises to the periplasm. The catalysed reaction is L-seryl-[protein] + ATP = O-phospho-L-seryl-[protein] + ADP + H(+). It carries out the reaction L-threonyl-[protein] + ATP = O-phospho-L-threonyl-[protein] + ADP + H(+). Its activity is regulated as follows. Activated by tyrosine and threonine phosphorylation after pheromone treatment or carbon/nitrogen limitation. In terms of biological role, together with closely related FUS3, KSS1 is the final kinase in the signal transduction cascade regulating activation/repression of the mating and filamentation pathways, induced by pheromone and nitrogen/carbon limitation, respectively. Phosphorylated KSS1 activates both pathways, whereas activated FUS3 activates the mating but suppresses the filamentation pathway. KSS1 activity is down-regulated by FUS3 during pheromone induction to prevent inappropriate activation of the filamentation pathway. During induction of filamentation, KSS1 activates the transcription factor STE12 resulting in its binding to and activation of filamentation specific genes. Non-activated KSS1 has a kinase-independent repressive effect on STE12 transcriptional activity, that is mediated by direct binding to STE12 and depends on the presence of DIG1 and DIG2, and that is required for the suppression of filamentation under normal growth conditions. SSN3/SRB10 contributes further to the suppression of filamentation under these conditions by reducing STE12 stability independent of KSS1. FUS3 can partially compensate for the lack of KSS1 but filamentation becomes constitutively induced at a low level in the absence of any signal. KSS1 phosphorylates STE7, STE5, FAR1, DIG1, DIG2, STE12, and SST2. The sequence is that of Mitogen-activated protein kinase KSS1 (KSS1) from Saccharomyces cerevisiae (strain ATCC 204508 / S288c) (Baker's yeast).